A 653-amino-acid polypeptide reads, in one-letter code: DNA-directed RNA polymerase III subunit RPC-3 (653 aa).

Disordered regions lie at residues I141–P186, D280–D309, and I422–G442. Basic and acidic residues predominate over residues A159–Q170. 2 stretches are compositionally biased toward acidic residues: residues P293 to D309 and E424 to G433. The interval T580–L601 is leucine-zipper.

This sequence belongs to the RNA polymerase beta chain family. Component of the RNA polymerase III (Pol III) complex consisting of 17 subunits.

The protein localises to the nucleus. Its function is as follows. DNA-dependent RNA polymerase catalyzes the transcription of DNA into RNA using the four ribonucleoside triphosphates as substrates. Specific core component of RNA polymerase III which synthesizes small RNAs, such as 5S rRNA and tRNAs. The protein is DNA-directed RNA polymerase III subunit RPC-3 (RPC-82) of Coccidioides immitis (strain RS) (Valley fever fungus).